Here is a 271-residue protein sequence, read N- to C-terminus: Large ribosomal subunit protein eL8 (271 aa).

Belongs to the eukaryotic ribosomal protein eL8 family.

In Drosophila melanogaster (Fruit fly), this protein is Large ribosomal subunit protein eL8 (RpL7A).